Here is an 87-residue protein sequence, read N- to C-terminus: U3-theraphotoxin-Hhn1a 18 (87 aa).

Positions 1–24 are cleaved as a signal peptide; the sequence is MVNTKASMFLTFAGLVLLFVVCYA. Positions 25–52 are excised as a propeptide; it reads SESEEKEFPKEMLSSIFAVDNDFKQEER. Cystine bridges form between C54/C67, C61/C72, and C66/C79.

The protein belongs to the neurotoxin 10 (Hwtx-1) family. 51 (Hntx-8) subfamily. Hntx-8 sub-subfamily. Expressed by the venom gland.

The protein resides in the secreted. Its function is as follows. Ion channel inhibitor. The protein is U3-theraphotoxin-Hhn1a 18 of Cyriopagopus hainanus (Chinese bird spider).